The primary structure comprises 362 residues: Peptide chain release factor 1 (362 aa).

Glutamine 236 bears the N5-methylglutamine mark.

Belongs to the prokaryotic/mitochondrial release factor family. In terms of processing, methylated by PrmC. Methylation increases the termination efficiency of RF1.

Its subcellular location is the cytoplasm. Peptide chain release factor 1 directs the termination of translation in response to the peptide chain termination codons UAG and UAA. In Lactobacillus helveticus (strain DPC 4571), this protein is Peptide chain release factor 1.